The chain runs to 158 residues: Transcription elongation factor GreA (158 aa).

The stretch at 4 to 75 forms a coiled coil; the sequence is EKTYPMTQEG…TQLENMIRNA (72 aa).

Belongs to the GreA/GreB family.

In terms of biological role, necessary for efficient RNA polymerase transcription elongation past template-encoded arresting sites. The arresting sites in DNA have the property of trapping a certain fraction of elongating RNA polymerases that pass through, resulting in locked ternary complexes. Cleavage of the nascent transcript by cleavage factors such as GreA or GreB allows the resumption of elongation from the new 3'terminus. GreA releases sequences of 2 to 3 nucleotides. This is Transcription elongation factor GreA from Bacillus anthracis (strain A0248).